Reading from the N-terminus, the 645-residue chain is ATP-dependent zinc metalloprotease FtsH (645 aa).

At 1–8 (MDFNREHK) the chain is on the cytoplasmic side. The chain crosses the membrane as a helical span at residues 9–29 (INFLYVLAAMVGVLLIQSLVS). At 30 to 105 (QPDHIRTIPY…FSGEPEPGPW (76 aa)) the chain is on the periplasmic side. A helical transmembrane segment spans residues 106-126 (PTILGWLMPIVGFALVWMFLI). Residues 127 to 645 (RPMSMGPGMD…ALTVEGGEAQ (519 aa)) lie on the Cytoplasmic side of the membrane. An ATP-binding site is contributed by 199-206 (GPPGTGKT). Residue His-423 participates in Zn(2+) binding. The active site involves Glu-424. Positions 427 and 500 each coordinate Zn(2+). The interval 612–645 (SASVLRDGGDGAADAGQDRSGEHRALTVEGGEAQ) is disordered. Basic and acidic residues predominate over residues 627–637 (GQDRSGEHRAL).

In the central section; belongs to the AAA ATPase family. This sequence in the C-terminal section; belongs to the peptidase M41 family. As to quaternary structure, homohexamer. The cofactor is Zn(2+).

Its subcellular location is the cell inner membrane. Acts as a processive, ATP-dependent zinc metallopeptidase for both cytoplasmic and membrane proteins. Plays a role in the quality control of integral membrane proteins. The protein is ATP-dependent zinc metalloprotease FtsH of Paraburkholderia phymatum (strain DSM 17167 / CIP 108236 / LMG 21445 / STM815) (Burkholderia phymatum).